The sequence spans 621 residues: GPI-anchor transamidase component GPAA1 (621 aa).

The Cytoplasmic portion of the chain corresponds to 2–19; that stretch reads GLLSDPVRRRALARLVLR. Residues 20–41 traverse the membrane as a helical segment; the sequence is LNAPLCVLSYVAGIAWFLALVF. Residues 42 to 370 are Lumenal-facing; the sequence is PPLTQRTYMS…LLPGLSRFVS (329 aa). Y49 and S51 together coordinate a 2-acyl-6-[6-phosphoethanolamine-alpha-D-mannosyl-(1-&gt;2)-6-phosphoethanolamine-alpha-D-mannosyl-(1-&gt;6)-2-phosphoethanolamine-alpha-D-mannosyl-(1-&gt;4)-alpha-D-glucosaminyl]-1-(1-radyl,2-acyl-sn-glycero-3-phospho)-1D-myo-inositol. N203 carries an N-linked (GlcNAc...) asparagine glycan. Cysteines 259 and 266 form a disulfide. The a 2-acyl-6-[6-phosphoethanolamine-alpha-D-mannosyl-(1-&gt;2)-6-phosphoethanolamine-alpha-D-mannosyl-(1-&gt;6)-2-phosphoethanolamine-alpha-D-mannosyl-(1-&gt;4)-alpha-D-glucosaminyl]-1-(1-radyl,2-acyl-sn-glycero-3-phospho)-1D-myo-inositol site is built by H354, Q355, and S356. Q355 provides a ligand contact to Mg(2+). Residues 371-393 traverse the membrane as a helical segment; it reads IGLYMPAVGFLLLVLGLKALELW. Over 394–425 the chain is Cytoplasmic; sequence MQLHEAGMGLEEPGGAPGPSVPLPPSQGVGLA. Residues 426–450 form a helical membrane-spanning segment; it reads SLVAPLLISQAMGLALYVLPVLGQH. The Lumenal segment spans residues 451-462; that stretch reads VATQHFPVAEAE. Residues 463-483 form a helical membrane-spanning segment; that stretch reads AVVLTLLAIYAAGLALPHNTH. The Cytoplasmic segment spans residues 484 to 495; the sequence is RVVSTQAPDRGW. 2 consecutive transmembrane segments (helical) span residues 496–519 and 520–536; these read MALK…TNFS and LGFL…ALAK. Over 537–540 the chain is Cytoplasmic; it reads PHGP. Residues 541-563 form a helical membrane-spanning segment; the sequence is RTLYAALLVLTSPAATLLGSLFL. The Lumenal portion of the chain corresponds to 564–597; sequence WRELQEAPLSLAEGWQLFLAALAQGVLEHHTYGA. Residues 598-619 form a helical membrane-spanning segment; the sequence is LLFPLLSLGLYPCWLLFWNVLF. Over 620 to 621 the chain is Cytoplasmic; the sequence is WK.

As to quaternary structure, heteropentamer. Part of the GPI-anchor transamidase complex, consisting of PIGK, PIGT, PIGS, PIGU and GAA1. Interacts with PIGK. In terms of tissue distribution, ubiquitously expressed in fetal and adult tissues. Expressed at higher levels in fetal tissues than adult tissues.

The protein localises to the endoplasmic reticulum membrane. The protein operates within glycolipid biosynthesis; glycosylphosphatidylinositol-anchor biosynthesis. Its function is as follows. Component of the glycosylphosphatidylinositol-anchor (GPI-anchor) transamidase (GPI-T) complex that catalyzes the formation of the linkage between a proprotein and a GPI-anchor and participates in GPI anchored protein biosynthesis. Binds GPI-anchor. The polypeptide is GPI-anchor transamidase component GPAA1 (Homo sapiens (Human)).